The chain runs to 227 residues: Leucyl/phenylalanyl-tRNA--protein transferase (227 aa).

This sequence belongs to the L/F-transferase family.

The protein resides in the cytoplasm. The catalysed reaction is N-terminal L-lysyl-[protein] + L-leucyl-tRNA(Leu) = N-terminal L-leucyl-L-lysyl-[protein] + tRNA(Leu) + H(+). The enzyme catalyses N-terminal L-arginyl-[protein] + L-leucyl-tRNA(Leu) = N-terminal L-leucyl-L-arginyl-[protein] + tRNA(Leu) + H(+). It catalyses the reaction L-phenylalanyl-tRNA(Phe) + an N-terminal L-alpha-aminoacyl-[protein] = an N-terminal L-phenylalanyl-L-alpha-aminoacyl-[protein] + tRNA(Phe). In terms of biological role, functions in the N-end rule pathway of protein degradation where it conjugates Leu, Phe and, less efficiently, Met from aminoacyl-tRNAs to the N-termini of proteins containing an N-terminal arginine or lysine. In Afipia carboxidovorans (strain ATCC 49405 / DSM 1227 / KCTC 32145 / OM5) (Oligotropha carboxidovorans), this protein is Leucyl/phenylalanyl-tRNA--protein transferase.